The sequence spans 152 residues: MESKIRNYYAVKVTGGQEVSVGLMLEERAKTNNIPEIYSIIVPPGLKGYVIVEASGPHVVKLLIAGIRHVRGIAQGLVPKDHIVKMVSKKVTGPTIKEGDLVEVVSGPFRGMQAQVVKVTEGKGEVVLNILESAFPLQVTIPVDQVKPVKKT.

Residues 98 to 127 (EGDLVEVVSGPFRGMQAQVVKVTEGKGEVV) enclose the KOW domain.

It belongs to the archaeal Spt5 family. As to quaternary structure, heterodimer composed of Spt4 and Spt5. Interacts with RNA polymerase (RNAP).

In terms of biological role, stimulates transcription elongation. The sequence is that of Transcription elongation factor Spt5 from Acidianus ambivalens (Desulfurolobus ambivalens).